Here is a 287-residue protein sequence, read N- to C-terminus: 4-hydroxybenzoate octaprenyltransferase (287 aa).

Helical transmembrane passes span 23–43 (IGSL…GGTA), 46–66 (GKLL…GCVI), 99–119 (LFVL…AMTI), 141–161 (LPQV…YAAV), 162–182 (GESL…WTVA), 213–233 (LVIG…GDLN), 237–257 (GAYY…QQLI), and 266–286 (FRAF…ILLA).

The protein belongs to the UbiA prenyltransferase family. It depends on Mg(2+) as a cofactor.

It localises to the cell inner membrane. The catalysed reaction is all-trans-octaprenyl diphosphate + 4-hydroxybenzoate = 4-hydroxy-3-(all-trans-octaprenyl)benzoate + diphosphate. The protein operates within cofactor biosynthesis; ubiquinone biosynthesis. Its function is as follows. Catalyzes the prenylation of para-hydroxybenzoate (PHB) with an all-trans polyprenyl group. Mediates the second step in the final reaction sequence of ubiquinone-8 (UQ-8) biosynthesis, which is the condensation of the polyisoprenoid side chain with PHB, generating the first membrane-bound Q intermediate 3-octaprenyl-4-hydroxybenzoate. This chain is 4-hydroxybenzoate octaprenyltransferase, found in Edwardsiella ictaluri (strain 93-146).